Consider the following 437-residue polypeptide: Enolase (437 aa).

Residue Gln162 coordinates (2R)-2-phosphoglycerate. The active-site Proton donor is the Glu204. Residues Asp251, Glu297, and Asp324 each contribute to the Mg(2+) site. (2R)-2-phosphoglycerate is bound by residues Lys349, Arg378, Ser379, and Lys400. Lys349 (proton acceptor) is an active-site residue.

The protein belongs to the enolase family. The cofactor is Mg(2+).

The protein resides in the cytoplasm. Its subcellular location is the secreted. It is found in the cell surface. It carries out the reaction (2R)-2-phosphoglycerate = phosphoenolpyruvate + H2O. It functions in the pathway carbohydrate degradation; glycolysis; pyruvate from D-glyceraldehyde 3-phosphate: step 4/5. Catalyzes the reversible conversion of 2-phosphoglycerate (2-PG) into phosphoenolpyruvate (PEP). It is essential for the degradation of carbohydrates via glycolysis. This Chlorobium phaeobacteroides (strain DSM 266 / SMG 266 / 2430) protein is Enolase.